The primary structure comprises 184 residues: Oligoribonuclease (184 aa).

Residues 10–172 (LVWVDCEMTG…ADVLESIAEL (163 aa)) form the Exonuclease domain. Y129 is an active-site residue.

It belongs to the oligoribonuclease family.

It localises to the cytoplasm. Functionally, 3'-to-5' exoribonuclease specific for small oligoribonucleotides. This is Oligoribonuclease from Tropheryma whipplei (strain Twist) (Whipple's bacillus).